Consider the following 185-residue polypeptide: Ribosome-recycling factor (185 aa).

It belongs to the RRF family.

It localises to the cytoplasm. In terms of biological role, responsible for the release of ribosomes from messenger RNA at the termination of protein biosynthesis. May increase the efficiency of translation by recycling ribosomes from one round of translation to another. This is Ribosome-recycling factor from Pseudoalteromonas atlantica (strain T6c / ATCC BAA-1087).